The following is a 556-amino-acid chain: Potassium-transporting ATPase potassium-binding subunit (556 aa).

Transmembrane regions (helical) follow at residues 6-26 (AGIL…VPLG), 65-85 (SVLA…LLQG), 133-153 (GLSV…MAFV), 176-196 (LRIL…GGVI), 249-269 (PTTW…FSLP), 283-303 (AAIL…MMLF), 378-398 (GLYS…LMVG), 419-439 (YFLV…ALPG), 483-503 (ALGL…LALA), and 526-546 (FVGM…LPVL).

Belongs to the KdpA family. The system is composed of three essential subunits: KdpA, KdpB and KdpC.

The protein resides in the cell membrane. In terms of biological role, part of the high-affinity ATP-driven potassium transport (or Kdp) system, which catalyzes the hydrolysis of ATP coupled with the electrogenic transport of potassium into the cytoplasm. This subunit binds the extracellular potassium ions and delivers the ions to the membrane domain of KdpB through an intramembrane tunnel. This Mycobacterium sp. (strain KMS) protein is Potassium-transporting ATPase potassium-binding subunit.